We begin with the raw amino-acid sequence, 313 residues long: MPTTPDPGSEPPARTPRPPPLTPGLSPQPALHALSPQLLLLLFLAVSSLGSCSTGSPVPVPENDLVGIVGGHNAPPGKWPWQVSLRVYSYHWASWAHICGGSLIHPQWVLTAAHCIFWKDTDPSIYRIHAGDVYLYGGRGLLNVSRIIVHPNYVTAGLGADVALLQLEPHDLSNVRTVKLSPVSLELTPKDQCWVTGWGAIIRKESLPPPYRLQQASVQVLENAVCEQPYRNASGHTGDRQLILDDMLCAGSEGRDSCYGDSGGPLVCRLRGSWRLVGVVSWGYGCTLRDFPGVYTHVQIYVPWILQQVGELP.

Residues 1–22 (MPTTPDPGSEPPARTPRPPPLT) are compositionally biased toward pro residues. The disordered stretch occupies residues 1–27 (MPTTPDPGSEPPARTPRPPPLTPGLSP). One can recognise a Peptidase S1 domain in the interval 68–310 (IVGGHNAPPG…YVPWILQQVG (243 aa)). Cys-99 and Cys-115 are joined by a disulfide. His-114 acts as the Charge relay system in catalysis. Residue Asn-143 is glycosylated (N-linked (GlcNAc...) asparagine). Asp-161 functions as the Charge relay system in the catalytic mechanism. Cystine bridges form between Cys-193-Cys-268, Cys-226-Cys-249, and Cys-258-Cys-286. Ser-262 (charge relay system) is an active-site residue.

It belongs to the peptidase S1 family.

It localises to the secreted. The protein is Putative serine protease 29 (PRSS29P) of Homo sapiens (Human).